The sequence spans 377 residues: Probable dehydratase NIT22 (377 aa).

Residues Lys-101 and Arg-196 each contribute to the NADP(+) site. Residues 220–243 (ERGPKMNEHVPSTPPRRPDAVSSF) are disordered. One can recognise a MaoC-like domain in the interval 233 to 332 (PPRRPDAVSS…ILMWDMGLCK (100 aa)). 2 residues coordinate NADP(+): Thr-265 and Ile-287.

It belongs to the short-chain dehydrogenases/reductases (SDR) family.

The protein operates within siderophore biosynthesis. Probable dehydratase; part of the gene cluster that mediates the biosynthesis of hydroxamate-containing siderophores that play a critical role in virulence via intracellular iron acquisition during macrophage infection. This is Probable dehydratase NIT22 from Ajellomyces capsulatus (Darling's disease fungus).